Consider the following 325-residue polypeptide: Necdin (325 aa).

2 disordered regions span residues 1 to 69 (MSEQ…IEDV) and 77 to 96 (AAEE…IPAP). In terms of domain architecture, MAGE spans 102–301 (LVQKAHELMW…QAWPSRYREA (200 aa)).

In terms of assembly, binds to the transactivation domains of E2F1 and p53. Binds also SV40 large T antigen and adenovirus E1A. Interacts with nucleobindin 1 and 2. In terms of tissue distribution, brain specific. Not detected in other tissues. Expressed in postmitotic neurons. In adult brain the highest expression is in hypothalamus. Highly expressed in thalamus and midbrain. Relatively low levels are in cerebral cortex, hippocampus, striatum, olfactory bulb, cerebellum, pons and spinal cord. Also detected in neurally differentiated embryonal carcinoma cells.

Its subcellular location is the cytoplasm. The protein localises to the nucleus. It is found in the nucleoplasm. The protein resides in the nucleus matrix. Its function is as follows. Growth suppressor that facilitates the entry of the cell into cell cycle arrest. Functionally similar to the retinoblastoma protein it binds to and represses the activity of cell-cycle-promoting proteins such as SV40 large T antigen, adenovirus E1A, and the transcription factor E2F. Necdin also interacts with p53 and works in an additive manner to inhibit cell growth. Also functions as a transcription factor and directly binds to specific guanosine-rich DNA sequences. The sequence is that of Necdin (Ndn) from Mus musculus (Mouse).